Reading from the N-terminus, the 154-residue chain is Probable chemoreceptor glutamine deamidase CheD (154 aa).

Belongs to the CheD family.

It catalyses the reaction L-glutaminyl-[protein] + H2O = L-glutamyl-[protein] + NH4(+). In terms of biological role, probably deamidates glutamine residues to glutamate on methyl-accepting chemotaxis receptors (MCPs), playing an important role in chemotaxis. The chain is Probable chemoreceptor glutamine deamidase CheD from Methanococcus maripaludis (strain C6 / ATCC BAA-1332).